The primary structure comprises 126 residues: Large ribosomal subunit protein bL19 (126 aa).

This sequence belongs to the bacterial ribosomal protein bL19 family.

In terms of biological role, this protein is located at the 30S-50S ribosomal subunit interface and may play a role in the structure and function of the aminoacyl-tRNA binding site. This Dechloromonas aromatica (strain RCB) protein is Large ribosomal subunit protein bL19.